The following is a 293-amino-acid chain: Heterogeneous nuclear ribonucleoprotein C-like 1 (293 aa).

An RRM domain is found at 16 to 87; that stretch reads SRVFIGNLNT…QVVDINLAAE (72 aa). Disordered stretches follow at residues 137-177 and 206-293; these read ALAV…KLKG and KEQS…QDDS. Residues 177–225 adopt a coiled-coil conformation; sequence GDDLQAIKQELTQIKQKVDSLLENLEKIEKEQSKQEVEVKNAKSEEEQS. Basic and acidic residues-rich tracts occupy residues 206–222 and 229–240; these read KEQSKQEVEVKNAKSEE and MKKDETHVKMES. 2 stretches are compositionally biased toward acidic residues: residues 242–267 and 275–284; these read GGAEDSAEEGDPLDDDVNEDQGDDQL and KEAEEGEDDR.

Belongs to the RRM HNRPC family. RALY subfamily.

It localises to the nucleus. May play a role in nucleosome assembly by neutralizing basic proteins such as A and B core hnRNPs. This is Heterogeneous nuclear ribonucleoprotein C-like 1 (HNRNPCL1) from Homo sapiens (Human).